A 171-amino-acid polypeptide reads, in one-letter code: O-acetyl-ADP-ribose deacetylase 2 (171 aa).

The Macro domain occupies 1–171; sequence MNKITVIQGD…NYDLYLKLLN (171 aa). Residues 10–11, Asn-24, 32–34, and 121–125 each bind substrate; these read DI, GVD, and STGIY. Asp-34 serves as the catalytic Proton acceptor.

The protein belongs to the MacroD-type family. YmdB subfamily. In terms of assembly, homodimer. Interacts with RNase III.

It carries out the reaction 3''-O-acetyl-ADP-D-ribose + H2O = ADP-D-ribose + acetate + H(+). It catalyses the reaction 2''-O-acetyl-ADP-D-ribose + H2O = ADP-D-ribose + acetate + H(+). Deacetylates O-acetyl-ADP ribose to yield ADP-ribose and free acetate. Down-regulates ribonuclease 3 (RNase III) activity. Acts by interacting directly with the region of the ribonuclease that is required for dimerization/activation. The polypeptide is O-acetyl-ADP-ribose deacetylase 2 (Pantoea vagans (strain C9-1) (Pantoea agglomerans (strain C9-1))).